The chain runs to 435 residues: 3-ketoacyl-CoA thiolase (435 aa).

Catalysis depends on Cys98, which acts as the Acyl-thioester intermediate. Active-site proton acceptor residues include His391 and Cys421.

This sequence belongs to the thiolase-like superfamily. Thiolase family. As to quaternary structure, heterotetramer of two alpha chains (FadJ) and two beta chains (FadI).

It localises to the cytoplasm. The catalysed reaction is an acyl-CoA + acetyl-CoA = a 3-oxoacyl-CoA + CoA. It participates in lipid metabolism; fatty acid beta-oxidation. Its function is as follows. Catalyzes the final step of fatty acid oxidation in which acetyl-CoA is released and the CoA ester of a fatty acid two carbons shorter is formed. In Vibrio vulnificus (strain YJ016), this protein is 3-ketoacyl-CoA thiolase.